The following is a 256-amino-acid chain: Anamorsin homolog (256 aa).

The segment at 1–136 is N-terminal SAM-like domain; sequence MNSLSLELNK…DTNESSTINI (136 aa). Residues 126–148 are disordered; it reads WDTNESSTINIPSTSSNNPWASI. Over residues 131-144 the composition is skewed to low complexity; sequence SSTINIPSTSSNNP. The linker stretch occupies residues 137–166; that stretch reads PSTSSNNPWASIEGGDRINENDLVSENDKT. [2Fe-2S] cluster is bound by residues Cys-176, Cys-185, Cys-188, and Cys-190. The interval 176-190 is fe-S binding site A; sequence CEVGKTKKACKNCTC. Positions 217, 220, 228, and 231 each coordinate [4Fe-4S] cluster. Short sequence motifs (cx2C motif) lie at residues 217 to 220 and 228 to 231; these read CGNC and CGGC. The segment at 217-231 is fe-S binding site B; that stretch reads CGNCSLGDAFRCGGC.

The protein belongs to the anamorsin family. Monomer. [2Fe-2S] cluster serves as cofactor. [4Fe-4S] cluster is required as a cofactor.

The protein resides in the cytoplasm. The protein localises to the mitochondrion intermembrane space. Its function is as follows. Component of the cytosolic iron-sulfur (Fe-S) protein assembly (CIA) machinery. Required for the maturation of extramitochondrial Fe-S proteins. Part of an electron transfer chain functioning in an early step of cytosolic Fe-S biogenesis, facilitating the de novo assembly of a [4Fe-4S] cluster on the cytosolic Fe-S scaffold complex. Electrons are transferred from NADPH via a FAD- and FMN-containing diflavin oxidoreductase. Together with the diflavin oxidoreductase, also required for the assembly of the diferric tyrosyl radical cofactor of ribonucleotide reductase (RNR), probably by providing electrons for reduction during radical cofactor maturation in the catalytic small subunit. This is Anamorsin homolog (rsc43) from Dictyostelium discoideum (Social amoeba).